Here is a 311-residue protein sequence, read N- to C-terminus: Putative dihydroorotate dehydrogenase A (fumarate) (311 aa).

Residues Lys-45, 69 to 73 (NSMGL), and Asn-128 contribute to the substrate site. Residue 45–46 (KT) coordinates FMN. Position 128 (Asn-128) interacts with FMN. The active-site Nucleophile is the Cys-131. Positions 165 and 193 each coordinate FMN. Residue 194 to 195 (NS) participates in substrate binding. FMN contacts are provided by residues Gly-220, 248 to 249 (GG), and 270 to 271 (GT).

The protein belongs to the dihydroorotate dehydrogenase family. Type 1 subfamily. Homodimer. FMN is required as a cofactor.

The protein resides in the cytoplasm. The catalysed reaction is (S)-dihydroorotate + fumarate = orotate + succinate. It functions in the pathway pyrimidine metabolism; UMP biosynthesis via de novo pathway. Catalyzes the conversion of dihydroorotate to orotate with fumarate as the electron acceptor. This chain is Putative dihydroorotate dehydrogenase A (fumarate) (pyrD), found in Streptococcus pyogenes serotype M18 (strain MGAS8232).